The primary structure comprises 119 residues: C-C motif chemokine 24 (119 aa).

The first 26 residues, 1–26 (MAGLMTIVTSLLFLGVCAHHIIPTGS), serve as a signal peptide directing secretion. Cystine bridges form between C33–C58 and C34–C74. The N-linked (GlcNAc...) asparagine glycan is linked to N115.

It belongs to the intercrine beta (chemokine CC) family. In terms of processing, N-glycosylated. Activated monocytes and activated T lymphocytes.

It is found in the secreted. Functionally, chemotactic for resting T-lymphocytes, and eosinophils. Has lower chemotactic activity for neutrophils but none for monocytes and activated lymphocytes. Is a strong suppressor of colony formation by a multipotential hematopoietic progenitor cell line. Binds to CCR3. This is C-C motif chemokine 24 from Homo sapiens (Human).